The chain runs to 598 residues: Protein HIGH CHLOROPHYLL FLUORESCENCE PHENOTYPE 173, chloroplastic (598 aa).

A chloroplast-targeting transit peptide spans 1-79 (MVGSIVGSNM…ITTKESEETV (79 aa)). The tract at residues 42–106 (VIPRAQSSSS…PTLKLDDVNP (65 aa)) is disordered. A compositionally biased stretch (basic and acidic residues) spans 73-84 (KESEETVAKKLD). Pro residues predominate over residues 87–97 (PPSPQSPPSPP).

Belongs to the NmrA-type oxidoreductase family. In terms of assembly, component of a high molecular weight complex containing psbA mRNA, OHP1, OHP2 and HCF244, and PSII core proteins D1/D2, HCF136 and HCF173. Interacts with LPE1.

It is found in the plastid. It localises to the chloroplast membrane. The protein resides in the chloroplast thylakoid membrane. The protein localises to the chloroplast stroma. Functionally, auxiliary factor required, together with HCF244, for the biogenesis of photosystem II (PSII), especially for the synthesis of the reaction center proteins (e.g. D1), via the regulation of the corresponding mRNA (e.g. psbA) translation initiation (ribosomal loading) and stabilization. This Arabidopsis thaliana (Mouse-ear cress) protein is Protein HIGH CHLOROPHYLL FLUORESCENCE PHENOTYPE 173, chloroplastic.